Consider the following 862-residue polypeptide: Leucine--tRNA ligase (862 aa).

The short motif at 51-61 is the 'HIGH' region element; it reads PYPSGSLHMGH. Positions 624–628 match the 'KMSKS' region motif; it reads KMSKS. Residue Lys-627 participates in ATP binding.

Belongs to the class-I aminoacyl-tRNA synthetase family.

Its subcellular location is the cytoplasm. It carries out the reaction tRNA(Leu) + L-leucine + ATP = L-leucyl-tRNA(Leu) + AMP + diphosphate. This Prochlorococcus marinus (strain NATL2A) protein is Leucine--tRNA ligase.